The sequence spans 445 residues: Trigger factor (445 aa).

The 86-residue stretch at 172–257 (GDQVVIDFVG…VKSVNWAHMP (86 aa)) folds into the PPIase FKBP-type domain.

The protein belongs to the FKBP-type PPIase family. Tig subfamily.

Its subcellular location is the cytoplasm. It carries out the reaction [protein]-peptidylproline (omega=180) = [protein]-peptidylproline (omega=0). Involved in protein export. Acts as a chaperone by maintaining the newly synthesized protein in an open conformation. Functions as a peptidyl-prolyl cis-trans isomerase. The sequence is that of Trigger factor from Polynucleobacter asymbioticus (strain DSM 18221 / CIP 109841 / QLW-P1DMWA-1) (Polynucleobacter necessarius subsp. asymbioticus).